A 179-amino-acid chain; its full sequence is Cytochrome b6-f complex iron-sulfur subunit (179 aa).

The helical transmembrane segment at 21–43 (LLTFGSATGVALGMLYPVVRYFI) threads the bilayer. One can recognise a Rieske domain in the interval 61-162 (GNDISVSDFL…AAVSDDKITF (102 aa)). [2Fe-2S] cluster contacts are provided by Cys-108, His-110, Cys-126, and His-129. A disulfide bridge links Cys-113 with Cys-128.

This sequence belongs to the Rieske iron-sulfur protein family. In terms of assembly, the 4 large subunits of the cytochrome b6-f complex are cytochrome b6, subunit IV (17 kDa polypeptide, PetD), cytochrome f and the Rieske protein, while the 4 small subunits are PetG, PetL, PetM and PetN. The complex functions as a dimer. It depends on [2Fe-2S] cluster as a cofactor.

The protein resides in the cellular thylakoid membrane. It carries out the reaction 2 oxidized [plastocyanin] + a plastoquinol + 2 H(+)(in) = 2 reduced [plastocyanin] + a plastoquinone + 4 H(+)(out). Functionally, component of the cytochrome b6-f complex, which mediates electron transfer between photosystem II (PSII) and photosystem I (PSI), cyclic electron flow around PSI, and state transitions. This Cyanothece sp. (strain PCC 7425 / ATCC 29141) protein is Cytochrome b6-f complex iron-sulfur subunit.